A 398-amino-acid polypeptide reads, in one-letter code: Sphingosine 1-phosphate receptor 5 (398 aa).

Over 1-40 (MESGLLRPAPVSEVIVLHYNYTGKLRGARYQPGAGLRADA) the chain is Extracellular. A glycan (N-linked (GlcNAc...) asparagine) is linked at Asn-20. A helical transmembrane segment spans residues 41–61 (VVCLAVCAFIVLENLAVLLVL). Residues 62–70 (GRHPRFHAP) lie on the Cytoplasmic side of the membrane. The chain crosses the membrane as a helical span at residues 71–91 (MFLLLGSLTLSDLLAGAAYAA). The Extracellular segment spans residues 92 to 111 (NILLSGPLTLKLSPALWFAR). Residues 112 to 132 (EGGVFVALTASVLSLLAIALE) form a helical membrane-spanning segment. The Cytoplasmic portion of the chain corresponds to 133-151 (RSLTMARRGPAPVSSRGRT). A helical transmembrane segment spans residues 152–172 (LAMAAAAWGVSLLLGLLPALG). Residues 173–192 (WNCLGRLDACSTVLPLYAKA) are Extracellular-facing. The helical transmembrane segment at 193-213 (YVLFCVLAFVGILAAICALYA) threads the bilayer. Residues 214 to 252 (RIYCQVRANARRLPARPGTAGTTSTRARRKPRSLALLRT) are Cytoplasmic-facing. The chain crosses the membrane as a helical span at residues 253–273 (LSVVLLAFVACWGPLFLLLLL). The Extracellular portion of the chain corresponds to 274-287 (DVACPARTCPVLLQ). The helical transmembrane segment at 288–308 (ADPFLGLAMANSLLNPIIYTL) threads the bilayer. Residues 309 to 398 (TNRDLRHALL…RTLVSEPAAD (90 aa)) are Cytoplasmic-facing. Cys-323 carries S-palmitoyl cysteine lipidation. A disordered region spans residues 329–398 (GRDPSGSQQS…RTLVSEPAAD (70 aa)). The segment covering 333 to 347 (SGSQQSASAAEASGG) has biased composition (low complexity). A Phosphoserine modification is found at Ser-381.

Belongs to the G-protein coupled receptor 1 family. As to expression, widely expressed in the brain, most prominently in the corpus callosum, which is predominantly white matter. Detected in spleen, peripheral blood leukocytes, placenta, lung, aorta and fetal spleen. Low-level signal detected in many tissue extracts. Overexpressed in leukemic large granular lymphocytes. Isoform 1 is predominantly expressed in peripheral tissues. Isoform 2 is expressed in brain, spleen and peripheral blood leukocytes.

It localises to the cell membrane. Receptor for the lysosphingolipid sphingosine 1-phosphate (S1P). S1P is a bioactive lysophospholipid that elicits diverse physiological effect on most types of cells and tissues. Is coupled to both the G(i/0)alpha and G(12) subclass of heteromeric G-proteins. May play a regulatory role in the transformation of radial glial cells into astrocytes and may affect proliferative activity of these cells. This chain is Sphingosine 1-phosphate receptor 5 (S1PR5), found in Homo sapiens (Human).